A 308-amino-acid polypeptide reads, in one-letter code: D-alanine--D-alanine ligase (308 aa).

One can recognise an ATP-grasp domain in the interval 100–295 (KEVFVRNGLP…FDGLIGRLIE (196 aa)). 127-180 (PFAFPAFIKSNNGGSSLALHRVSCPGELARALDELFTRGGEAIIEPAVEGVEVT) contacts ATP. The Mg(2+) site is built by Asp-249, Glu-262, and Asn-264.

Belongs to the D-alanine--D-alanine ligase family. It depends on Mg(2+) as a cofactor. Mn(2+) serves as cofactor.

The protein localises to the cytoplasm. It catalyses the reaction 2 D-alanine + ATP = D-alanyl-D-alanine + ADP + phosphate + H(+). Its pathway is cell wall biogenesis; peptidoglycan biosynthesis. In terms of biological role, cell wall formation. The protein is D-alanine--D-alanine ligase of Oleidesulfovibrio alaskensis (strain ATCC BAA-1058 / DSM 17464 / G20) (Desulfovibrio alaskensis).